The following is a 1412-amino-acid chain: MPN domain-containing protein CG4751 (1412 aa).

The segment covering 1–10 (MENGVEHGVD) has biased composition (basic and acidic residues). The tract at residues 1-123 (MENGVEHGVD…TKENYEGFNG (123 aa)) is disordered. Acidic residues-rich tracts occupy residues 23-35 (GEGD…EVEG) and 103-114 (SDAGDEDNDDET). An RAMA domain is found at 113–219 (ETKENYEGFN…AYKNTYLRKC (107 aa)). The 137-residue stretch at 284 to 420 (ITVNSSALLL…LESVVKCIWI (137 aa)) folds into the MPN domain. Residues histidine 361, histidine 363, and aspartate 374 each contribute to the Zn(2+) site. 7 disordered regions span residues 554–589 (INPP…QKAS), 669–734 (SALN…DIAR), 853–891 (GGSG…NSYK), 1027–1066 (SIPP…QQQQ), 1271–1318 (MKPP…NSGG), 1330–1376 (SSVP…SGGV), and 1389–1412 (LAAP…LSHD). Residues 572-600 (SGRKAEEESNAQAEQKASELKVMSLQEQL) adopt a coiled-coil conformation. Phosphoserine is present on residues serine 699, serine 701, serine 705, serine 719, serine 723, and serine 728. The segment covering 702 to 720 (PAKSDTSSHASTSRTRNSP) has biased composition (polar residues). Composition is skewed to low complexity over residues 873-891 (KSSS…NSYK) and 1036-1066 (SSGS…QQQQ). Residues 1275–1290 (KSTTPSSARTRESSAS) show a composition bias toward polar residues. A phosphoserine mark is found at serine 1288 and serine 1290. A Phosphothreonine modification is found at threonine 1297. Low complexity predominate over residues 1360–1370 (LYGELAPPGAL).

This sequence belongs to the peptidase M67 family.

Its function is as follows. Probable protease. The protein is MPN domain-containing protein CG4751 of Drosophila melanogaster (Fruit fly).